An 86-amino-acid chain; its full sequence is MATKKAGGSSRNGRDSAGRRLGVKKSDGQYVIPGNIIVRQRGTTIHPGTNVGLGKDHTIFALIEGRVEFLTKRNHKIVNVKEITNA.

Residues Met-1–Ser-26 form a disordered region.

Belongs to the bacterial ribosomal protein bL27 family.

The polypeptide is Large ribosomal subunit protein bL27 (Rickettsia akari (strain Hartford)).